The chain runs to 113 residues: Beta-defensin 112 (113 aa).

Disulfide bonds link Cys-54–Cys-82, Cys-61–Cys-75, and Cys-65–Cys-83.

It belongs to the beta-defensin family.

The protein localises to the secreted. Its function is as follows. Has antibacterial activity. This chain is Beta-defensin 112 (DEFB112), found in Homo sapiens (Human).